A 659-amino-acid chain; its full sequence is DNA ligase (659 aa).

NAD(+)-binding positions include 32–36, 81–82, and glutamate 111; these read DFEYD and SL. Lysine 113 (N6-AMP-lysine intermediate) is an active-site residue. The NAD(+) site is built by arginine 134, glutamate 168, lysine 280, and lysine 304. Residues cysteine 398, cysteine 401, cysteine 416, and cysteine 421 each coordinate Zn(2+). The region spanning 585–655 is the BRCT domain; it reads ETNSIYFQKR…KELNIPIINE (71 aa).

This sequence belongs to the NAD-dependent DNA ligase family. LigA subfamily. Requires Mg(2+) as cofactor. The cofactor is Mn(2+).

It carries out the reaction NAD(+) + (deoxyribonucleotide)n-3'-hydroxyl + 5'-phospho-(deoxyribonucleotide)m = (deoxyribonucleotide)n+m + AMP + beta-nicotinamide D-nucleotide.. DNA ligase that catalyzes the formation of phosphodiester linkages between 5'-phosphoryl and 3'-hydroxyl groups in double-stranded DNA using NAD as a coenzyme and as the energy source for the reaction. It is essential for DNA replication and repair of damaged DNA. This is DNA ligase from Mycoplasma genitalium (strain ATCC 33530 / DSM 19775 / NCTC 10195 / G37) (Mycoplasmoides genitalium).